The sequence spans 178 residues: Ribosome maturation factor RimP (178 aa).

Belongs to the RimP family.

It localises to the cytoplasm. In terms of biological role, required for maturation of 30S ribosomal subunits. The sequence is that of Ribosome maturation factor RimP from Mycobacterium avium (strain 104).